The chain runs to 302 residues: Homoserine O-acetyltransferase (302 aa).

Cysteine 142 (acyl-thioester intermediate) is an active-site residue. 2 residues coordinate substrate: lysine 163 and serine 192. Histidine 235 serves as the catalytic Proton acceptor. Residue glutamate 237 is part of the active site. Arginine 249 contributes to the substrate binding site.

Belongs to the MetA family.

It is found in the cytoplasm. The enzyme catalyses L-homoserine + acetyl-CoA = O-acetyl-L-homoserine + CoA. Its pathway is amino-acid biosynthesis; L-methionine biosynthesis via de novo pathway; O-acetyl-L-homoserine from L-homoserine: step 1/1. Functionally, transfers an acetyl group from acetyl-CoA to L-homoserine, forming acetyl-L-homoserine. This Geobacillus kaustophilus (strain HTA426) protein is Homoserine O-acetyltransferase.